A 234-amino-acid chain; its full sequence is Adenylate dimethylallyltransferase (234 aa).

The protein belongs to the isopentenyl transferase family.

It carries out the reaction dimethylallyl diphosphate + AMP = N(6)-(dimethylallyl)adenosine 5'-phosphate + diphosphate. In terms of biological role, transfers dimethylallyl groups to AMP as part of the biosynthesis of cytokinin phytohormones. The sequence is that of Adenylate dimethylallyltransferase (ptz) from Pseudomonas savastanoi (Pseudomonas syringae pv. savastanoi).